Consider the following 129-residue polypeptide: MRITQGCFSFLPDLTDEQISAQVDYCLGRGWAVSLEHTDDPHPRNTYWEMWGMPMFDLRDPKGVMIELDECRKAWPGRYIRINAFDSTRGFETVTMSFIVNRPEVEPSLRMERTEVDGRSIRYTHSIVR.

It belongs to the RuBisCO small chain family. As to quaternary structure, heterohexadecamer of 8 large and 8 small subunits.

RuBisCO catalyzes two reactions: the carboxylation of D-ribulose 1,5-bisphosphate, the primary event in carbon dioxide fixation, as well as the oxidative fragmentation of the pentose substrate. Both reactions occur simultaneously and in competition at the same active site. Although the small subunit is not catalytic it is essential for maximal activity. This Cereibacter sphaeroides (Rhodobacter sphaeroides) protein is Ribulose bisphosphate carboxylase small subunit.